The following is a 256-amino-acid chain: Ubiquinone/menaquinone biosynthesis C-methyltransferase UbiE (256 aa).

The span at 1–12 (MNDQRKGEHAEP) shows a compositional bias: basic and acidic residues. The segment at 1 to 21 (MNDQRKGEHAEPTTHFGYQDV) is disordered. S-adenosyl-L-methionine contacts are provided by residues Thr-79, Asp-100, and 128–129 (DA).

The protein belongs to the class I-like SAM-binding methyltransferase superfamily. MenG/UbiE family.

The catalysed reaction is a 2-demethylmenaquinol + S-adenosyl-L-methionine = a menaquinol + S-adenosyl-L-homocysteine + H(+). It carries out the reaction a 2-methoxy-6-(all-trans-polyprenyl)benzene-1,4-diol + S-adenosyl-L-methionine = a 5-methoxy-2-methyl-3-(all-trans-polyprenyl)benzene-1,4-diol + S-adenosyl-L-homocysteine + H(+). It functions in the pathway quinol/quinone metabolism; menaquinone biosynthesis; menaquinol from 1,4-dihydroxy-2-naphthoate: step 2/2. It participates in cofactor biosynthesis; ubiquinone biosynthesis. Methyltransferase required for the conversion of demethylmenaquinol (DMKH2) to menaquinol (MKH2) and the conversion of 2-polyprenyl-6-methoxy-1,4-benzoquinol (DDMQH2) to 2-polyprenyl-3-methyl-6-methoxy-1,4-benzoquinol (DMQH2). This Pseudomonas putida (strain W619) protein is Ubiquinone/menaquinone biosynthesis C-methyltransferase UbiE.